The primary structure comprises 250 residues: Probable 2' cyclic ADP-D-ribose synthase TcpB (250 aa).

The segment at 1 to 46 (MSKEKQAQSKAHKAQQAISSAKSLSTQKSKMSELERATRDGAAIGK) is disordered. The necessary and sufficient for phosphoinositide binding stretch occupies residues 1–117 (MSKEKQAQSK…TASATMEAEE (117 aa)). Over residues 14 to 23 (AQQAISSAKS) the composition is skewed to low complexity. Over residues 30-39 (KMSELERATR) the composition is skewed to basic and acidic residues. The TIR domain maps to 117–250 (EEYDFFISHA…EIAKELHSLI (134 aa)). The active site involves E192.

In terms of assembly, homodimer; may also form oligomers. Interacts with host TIRAP. Interacts with host MYD88. Interaction with host MYD88 was not confirmed by another study. Interacts with host TLR4. Abolishes the interaction of host TIRAP with TLR4.

The protein resides in the secreted. It localises to the host cell membrane. The enzyme catalyses NAD(+) + H2O = ADP-D-ribose + nicotinamide + H(+). It catalyses the reaction NAD(+) = 2'cADPR + nicotinamide + H(+). Its function is as follows. Virulence factor that interferes with host Toll-like receptor 2 (TLR2) and TLR4 signaling, resulting in the reduction of dendritic cell maturation, inhibition of pro-inflammatory cytokine secretion and impaired NF-kappa-B activation in macrophages. Interferes with host TLR4 signaling by abolishing host TLR4-TIRAP interaction (but not host TIRAP-MYD88 interaction) and its downstream signaling. Inhibits host TLR 2 induced NF-kappa-B activation and TNF (tumor necrosis factor) secretion. Binds phosphoinositide (PtdIns) via its N-terminal domain. Has NAD(+) hydrolase (NADase) activity, catalyzes cleavage of NAD(+) into ADP-D-ribose (ADPR) and nicotinamide. Also generates a cyclization variant of cyclic ADPR (cADPR), termed v-cADPR (probably 2'cADPR). The polypeptide is Probable 2' cyclic ADP-D-ribose synthase TcpB (Brucella melitensis biotype 1 (strain ATCC 23456 / CCUG 17765 / NCTC 10094 / 16M)).